Consider the following 51-residue polypeptide: Large ribosomal subunit protein eL39 (51 aa).

It belongs to the eukaryotic ribosomal protein eL39 family.

This is Large ribosomal subunit protein eL39 from Methanococcoides burtonii (strain DSM 6242 / NBRC 107633 / OCM 468 / ACE-M).